A 384-amino-acid polypeptide reads, in one-letter code: 8-amino-7-oxononanoate synthase (384 aa).

Position 21 (R21) interacts with substrate. A pyridoxal 5'-phosphate-binding site is contributed by 108-109 (GF). H133 serves as a coordination point for substrate. Positions 179, 207, and 233 each coordinate pyridoxal 5'-phosphate. K236 carries the post-translational modification N6-(pyridoxal phosphate)lysine. Position 352 (T352) interacts with substrate.

It belongs to the class-II pyridoxal-phosphate-dependent aminotransferase family. BioF subfamily. As to quaternary structure, homodimer. Pyridoxal 5'-phosphate serves as cofactor.

The enzyme catalyses 6-carboxyhexanoyl-[ACP] + L-alanine + H(+) = (8S)-8-amino-7-oxononanoate + holo-[ACP] + CO2. The protein operates within cofactor biosynthesis; biotin biosynthesis. Catalyzes the decarboxylative condensation of pimeloyl-[acyl-carrier protein] and L-alanine to produce 8-amino-7-oxononanoate (AON), [acyl-carrier protein], and carbon dioxide. This chain is 8-amino-7-oxononanoate synthase, found in Escherichia coli (strain K12 / DH10B).